Here is a 335-residue protein sequence, read N- to C-terminus: Serpentine receptor class XA 10 (335 aa).

Topologically, residues 1 to 10 (MDVDAAVVKR) are extracellular. The helical transmembrane segment at 11–31 (IALWVYETCSVFNLFYCITLS) threads the bilayer. Topologically, residues 32–46 (LAIKTSKNNALPATY) are cytoplasmic. A helical transmembrane segment spans residues 47 to 67 (IYNMAISNALLVIFGIMVYIL). Over 68 to 82 (PYYMSDKTYKTYRDS) the chain is Extracellular. The chain crosses the membrane as a helical span at residues 83–103 (IGAMISVGVTFNYLHPMLTLI). The Cytoplasmic segment spans residues 104–126 (LMTINRIAVVVSMQASQLFTSSK). Residues 127 to 147 (IWLYTSFHMTANFACLIIPYL) traverse the membrane as a helical segment. At 148 to 177 (SECRINYDIRKVGFISECAPDRHQITTFSN) the chain is on the extracellular side. A helical transmembrane segment spans residues 178-198 (YYSVFFPFVAFFFNVLVIINF). Residues 199 to 238 (KLQRSPTYTKIKNMFRRGNGDQFTSMPSDVLKAKKKTERM) are Cytoplasmic-facing. The chain crosses the membrane as a helical span at residues 239–259 (LMIQAFITAFYLSVYELTSLV). Residues 260–276 (LRVVPELFGNLSLDGKL) lie on the Extracellular side of the membrane. A helical transmembrane segment spans residues 277–297 (AFTYFRLAQVPCHVFLVYFIF). Residues 298 to 319 (TPVTRKIYMDFVRERVFCMKPA) are Cytoplasmic-facing.

The protein belongs to the nematode receptor-like protein srxa family.

The protein resides in the membrane. In Caenorhabditis elegans, this protein is Serpentine receptor class XA 10 (srxa-10).